A 254-amino-acid polypeptide reads, in one-letter code: Putative epimerase LsrE (254 aa).

A helical transmembrane segment spans residues 14 to 34 (VALLASYPLSVGILAGQWIAL). Residues H50, D52, and H81 each coordinate a divalent metal cation. The Proton acceptor role is filled by D52. Residues H81, 166–169 (GYGS), 199–201 (DGS), and 221–222 (GS) contribute to the substrate site. Residue D199 coordinates a divalent metal cation. Catalysis depends on D199, which acts as the Proton donor.

The protein belongs to the ribulose-phosphate 3-epimerase family. The cofactor is a divalent metal cation.

It is found in the cell membrane. In Salmonella choleraesuis (strain SC-B67), this protein is Putative epimerase LsrE (lsrE).